Consider the following 413-residue polypeptide: Oxidoreductase vrtI (413 aa).

The Fe2OG dioxygenase domain occupies aspartate 235 to alanine 341. 3 residues coordinate Fe cation: histidine 262, aspartate 264, and histidine 319. Arginine 332 provides a ligand contact to 2-oxoglutarate.

This sequence belongs to the iron/ascorbate-dependent oxidoreductase family.

The protein operates within secondary metabolite biosynthesis; terpenoid biosynthesis. Its function is as follows. Oxidoreductase; part of the gene cluster that mediates the biosynthesis of viridicatumtoxin, a tetracycline-like fungal meroterpenoid with a unique, fused spirobicyclic ring system. The first step of the pathway is the production of the malonamoyl-CoA starter unit for the polyketide synthase vrtA. The aldolase vrtJ may be involved in the synthesis of the malonamate substrate for malonamoyl-CoA synthetase vrtB. The polyketide synthase vrtA then may utilize the malonamoyl-CoA starter unit, followed by sequential condensation of eight malonyl-CoA units to form the polyketide backbone. The cyclization of the last ring could be mediated by the lactamase-like protein vrtG. The proposed post-PKS tailoring steps are a hydroxylation at C5 catalyzed the cytochrome P450 monooxygenase vrtE, a hydroxylation at C12a catalyzed by VrtH and/or VrtI, and an O-methylation by the O-methyltransferase vrtF. VrtC is then proposed to catalyze the transfer of a geranyl group synthesized by vrtD to the aromatic C ring of the tetracyclic polyketide intermediate of viridicatumtoxin to yield previridicatumtoxin. Finally, the cytochrome P450 monooxygenase vrtK catalyzes the spirocyclization of the geranyl moiety of previridicatumtoxin to afford viridicatumtoxin. The chain is Oxidoreductase vrtI from Penicillium aethiopicum.